A 231-amino-acid polypeptide reads, in one-letter code: Uracil-DNA glycosylase (231 aa).

The Proton acceptor role is filled by D70.

The protein belongs to the uracil-DNA glycosylase (UDG) superfamily. UNG family.

Its subcellular location is the cytoplasm. The catalysed reaction is Hydrolyzes single-stranded DNA or mismatched double-stranded DNA and polynucleotides, releasing free uracil.. In terms of biological role, excises uracil residues from the DNA which can arise as a result of misincorporation of dUMP residues by DNA polymerase or due to deamination of cytosine. The chain is Uracil-DNA glycosylase from Campylobacter curvus (strain 525.92).